The chain runs to 379 residues: Glucose-1-phosphate adenylyltransferase (379 aa).

Residues Gly164, 179–180 (EK), and Ser190 each bind alpha-D-glucose 1-phosphate.

This sequence belongs to the bacterial/plant glucose-1-phosphate adenylyltransferase family. In terms of assembly, homotetramer.

The enzyme catalyses alpha-D-glucose 1-phosphate + ATP + H(+) = ADP-alpha-D-glucose + diphosphate. Its pathway is glycan biosynthesis; glycogen biosynthesis. Functionally, involved in the biosynthesis of ADP-glucose, a building block required for the elongation reactions to produce glycogen. Catalyzes the reaction between ATP and alpha-D-glucose 1-phosphate (G1P) to produce pyrophosphate and ADP-Glc. This chain is Glucose-1-phosphate adenylyltransferase, found in Streptococcus agalactiae serotype Ia (strain ATCC 27591 / A909 / CDC SS700).